The primary structure comprises 831 residues: Cation/H(+) symporter 13 (831 aa).

Helical transmembrane passes span 50-70 (YALPLLLLQMSVIIVTSRLIF), 89-109 (VVLGPSFLGHNVIYMNMFLPA), 112-132 (KIIIQTLSNVGFVIHLFLLGL), 147-167 (ILIGTASYAFPFSLGNLTIMF), 214-234 (LATHCSMVCEVCSWFVALAFN), 250-270 (MIIGLLLVIYFVFRPIIVWLT), 282-302 (VVPFFPVLLLLSIASLSGEAM), 303-323 (GVHAAFGAFWLGVSLPDGPPL), 334-354 (FASNLFLPCFIAISGLQTNFF), 364-384 (VVMIEIILLITYGCKFLGTAA), 397-417 (LCLAFLMCCQGIIEVYTTIVW), and 430-450 (LVIITILFVTGISRFLVVYLY).

This sequence belongs to the monovalent cation:proton antiporter 2 (CPA2) transporter (TC 2.A.37) family. CHX (TC 2.A.37.4) subfamily. Preferentially expressed in pollen before and after germination. Detected in pollen grains within anthers of the flower buds or in pollen on fully open flowers and on the stigma, and in pollen tubes growing in the style. Weakly expressed in roots.

The protein resides in the cell membrane. In terms of biological role, high-affinity potassium transporter that plays a role in K(+) acquisition. May operate as a K(+)/H(+) symporter. The sequence is that of Cation/H(+) symporter 13 (CHX13) from Arabidopsis thaliana (Mouse-ear cress).